A 704-amino-acid chain; its full sequence is MARLVALDRVRNIGIMAHIDAGKTTTTERILYYTGRLHRMGEVHDGGATMDWMEQEKERGITITSAATTCFWTPKFGNYQGINHRINIIDTPGHVDFTVEVERSLRVLDGAVALFCAVGGVEPQSETVWRQANKYGVPRIAYINKMDRTGANFFDAVKSIRERLGANPVPLQIPIGEGEMFAGFVDLIRMKGIIYDKEDGSTYQEVEIPHDLQNEAKAWRINMLEAVSEHDDTLLEKYLNGEDITDEEVRKVLRQATLQVTIIPILCGSSFKNKGVQFMLDAVIEYLASPVDVPAVEGHHPRTEEPISRKPTDEEPFAALAFKIATDPFVGKLTFFRVYSGVLKAGSYVLNTITGKKERVGRVLQMHSNKREDIEAVYCGDIAAAVGLKDVKTGDTLCDENNPVVLEKMVFPEPVIQIAIEPKTKSDSDKLGMSLAKLAEEDPTFKVKTDEETGQTLIAGMGELHLEILVDRLRREFKVDANVGKPQVAYRETIRKSVEFEGKFVRQSGGKGQFGLVNLKVEPLEEGKGYEFVDAIKGGVIPREYIPAVNAGIQEAMKGGVVAGFPMQDVRVTLFDGKYHEVDSSEMAFKIAGSIGFKGAAKKADPVLLEPIMKVEVVTPEEYLGDVMGDLSSRRGHIEGMGQRAGAQFVAAKVPLSSMFGYSTDLRSMSQGRANYSMEFECYREVPRNIAESLQEKRTSKDAE.

The 284-residue stretch at 8–291 (DRVRNIGIMA…AVIEYLASPV (284 aa)) folds into the tr-type G domain. Residues 17-24 (AHIDAGKT), 90-94 (DTPGH), and 144-147 (NKMD) each bind GTP.

This sequence belongs to the TRAFAC class translation factor GTPase superfamily. Classic translation factor GTPase family. EF-G/EF-2 subfamily.

The protein localises to the cytoplasm. Its function is as follows. Catalyzes the GTP-dependent ribosomal translocation step during translation elongation. During this step, the ribosome changes from the pre-translocational (PRE) to the post-translocational (POST) state as the newly formed A-site-bound peptidyl-tRNA and P-site-bound deacylated tRNA move to the P and E sites, respectively. Catalyzes the coordinated movement of the two tRNA molecules, the mRNA and conformational changes in the ribosome. This chain is Elongation factor G, found in Chlorobium chlorochromatii (strain CaD3).